We begin with the raw amino-acid sequence, 257 residues long: Pyridoxine 5'-phosphate synthase (257 aa).

Asn-6 serves as a coordination point for 3-amino-2-oxopropyl phosphate. 8 to 9 (DH) provides a ligand contact to 1-deoxy-D-xylulose 5-phosphate. Residue Arg-17 coordinates 3-amino-2-oxopropyl phosphate. His-41 acts as the Proton acceptor in catalysis. Residues Arg-43 and His-48 each contribute to the 1-deoxy-D-xylulose 5-phosphate site. Glu-68 (proton acceptor) is an active-site residue. Thr-98 lines the 1-deoxy-D-xylulose 5-phosphate pocket. His-210 (proton donor) is an active-site residue. 3-amino-2-oxopropyl phosphate is bound by residues Gly-211 and 232-233 (GQ).

Belongs to the PNP synthase family. In terms of assembly, homooctamer; tetramer of dimers.

Its subcellular location is the cytoplasm. The catalysed reaction is 3-amino-2-oxopropyl phosphate + 1-deoxy-D-xylulose 5-phosphate = pyridoxine 5'-phosphate + phosphate + 2 H2O + H(+). Its pathway is cofactor biosynthesis; pyridoxine 5'-phosphate biosynthesis; pyridoxine 5'-phosphate from D-erythrose 4-phosphate: step 5/5. Catalyzes the complicated ring closure reaction between the two acyclic compounds 1-deoxy-D-xylulose-5-phosphate (DXP) and 3-amino-2-oxopropyl phosphate (1-amino-acetone-3-phosphate or AAP) to form pyridoxine 5'-phosphate (PNP) and inorganic phosphate. In Campylobacter jejuni (strain RM1221), this protein is Pyridoxine 5'-phosphate synthase.